Reading from the N-terminus, the 145-residue chain is Ribonuclease HI (145 aa).

The RNase H type-1 domain maps to 1 to 142 (MNQTVYLYTD…ADDLANRGAA (142 aa)). 4 residues coordinate Mg(2+): Asp-10, Glu-48, Asp-70, and Asp-134.

Belongs to the RNase H family. Monomer. It depends on Mg(2+) as a cofactor.

The protein localises to the cytoplasm. It carries out the reaction Endonucleolytic cleavage to 5'-phosphomonoester.. Endonuclease that specifically degrades the RNA of RNA-DNA hybrids. The polypeptide is Ribonuclease HI (Neisseria meningitidis serogroup A / serotype 4A (strain DSM 15465 / Z2491)).